The primary structure comprises 89 residues: Nitrogen regulatory protein (89 aa).

Residues 6 to 89 form the PTS EIIA type-2 domain; that stretch reads TILTPGRSLV…ALLHLEAPID (84 aa). The active-site Tele-phosphohistidine intermediate is His68.

Its subcellular location is the cytoplasm. Seems to have a role in regulating nitrogen assimilation. The protein is Nitrogen regulatory protein (ptsN) of Pseudomonas putida (Arthrobacter siderocapsulatus).